The primary structure comprises 54 residues: uncharacterized protein (54 aa).

A helical transmembrane segment spans residues 21 to 43 (SYVVCLYMCGSDCACICVLACVV).

The protein resides in the membrane. This is an uncharacterized protein from Saccharomyces cerevisiae (strain ATCC 204508 / S288c) (Baker's yeast).